The primary structure comprises 214 residues: Ribonuclease T (214 aa).

The 176-residue stretch at 20 to 195 folds into the Exonuclease domain; sequence VVVDVETAGF…YDTQQTAELF (176 aa). Mg(2+) contacts are provided by D23, E25, H182, and D187. Residue H182 is the Proton donor/acceptor of the active site.

This sequence belongs to the RNase T family. Homodimer. The cofactor is Mg(2+).

Trims short 3' overhangs of a variety of RNA species, leaving a one or two nucleotide 3' overhang. Responsible for the end-turnover of tRNA: specifically removes the terminal AMP residue from uncharged tRNA (tRNA-C-C-A). Also appears to be involved in tRNA biosynthesis. The sequence is that of Ribonuclease T from Vibrio campbellii (strain ATCC BAA-1116).